The primary structure comprises 147 residues: Hemoglobin subunit epsilon (147 aa).

Positions H3–H147 constitute a Globin domain. Phosphoserine occurs at positions 14 and 51. Positions 64 and 93 each coordinate heme b.

This sequence belongs to the globin family. Heterotetramer of two alpha chains and two epsilon chains in early embryonic hemoglobin Gower-2; two zeta chains and two epsilon chains in early embryonic hemoglobin Gower-1. In terms of tissue distribution, red blood cells.

The epsilon chain is a beta-type chain of early mammalian embryonic hemoglobin. This Cheirogaleus medius (Fat-tailed dwarf lemur) protein is Hemoglobin subunit epsilon (HBE1).